The primary structure comprises 715 residues: Fatty acid oxidation complex subunit alpha (715 aa).

The interval 1 to 190 (MIYQGKAITV…KVGAVDAVVA (190 aa)) is enoyl-CoA hydratase/isomerase. Position 297 (D297) interacts with substrate. The segment at 312 to 715 (HDAKQAAVLG…MAKNGQRFFN (404 aa)) is 3-hydroxyacyl-CoA dehydrogenase. NAD(+) contacts are provided by residues M325, D344, 401 to 403 (VVE), K408, and S430. The For 3-hydroxyacyl-CoA dehydrogenase activity role is filled by H451. NAD(+) is bound at residue N454. The substrate site is built by N501 and Y660.

This sequence in the N-terminal section; belongs to the enoyl-CoA hydratase/isomerase family. The protein in the C-terminal section; belongs to the 3-hydroxyacyl-CoA dehydrogenase family. Heterotetramer of two alpha chains (FadB) and two beta chains (FadA).

The catalysed reaction is a (3S)-3-hydroxyacyl-CoA + NAD(+) = a 3-oxoacyl-CoA + NADH + H(+). The enzyme catalyses a (3S)-3-hydroxyacyl-CoA = a (2E)-enoyl-CoA + H2O. It catalyses the reaction a 4-saturated-(3S)-3-hydroxyacyl-CoA = a (3E)-enoyl-CoA + H2O. It carries out the reaction (3S)-3-hydroxybutanoyl-CoA = (3R)-3-hydroxybutanoyl-CoA. The catalysed reaction is a (3Z)-enoyl-CoA = a 4-saturated (2E)-enoyl-CoA. The enzyme catalyses a (3E)-enoyl-CoA = a 4-saturated (2E)-enoyl-CoA. Its pathway is lipid metabolism; fatty acid beta-oxidation. In terms of biological role, involved in the aerobic and anaerobic degradation of long-chain fatty acids via beta-oxidation cycle. Catalyzes the formation of 3-oxoacyl-CoA from enoyl-CoA via L-3-hydroxyacyl-CoA. It can also use D-3-hydroxyacyl-CoA and cis-3-enoyl-CoA as substrate. The chain is Fatty acid oxidation complex subunit alpha from Ectopseudomonas oleovorans (Pseudomonas oleovorans).